A 332-amino-acid chain; its full sequence is Nucleoid-associated protein VVA0877 (332 aa).

Belongs to the YejK family.

It is found in the cytoplasm. The protein localises to the nucleoid. In Vibrio vulnificus (strain YJ016), this protein is Nucleoid-associated protein VVA0877.